A 302-amino-acid chain; its full sequence is UTP--glucose-1-phosphate uridylyltransferase (302 aa).

This sequence belongs to the UDPGP type 2 family. Homotetramer or homopentamer. Mg(2+) serves as cofactor.

It carries out the reaction alpha-D-glucose 1-phosphate + UTP + H(+) = UDP-alpha-D-glucose + diphosphate. Functionally, may play a role in stationary phase survival. This is UTP--glucose-1-phosphate uridylyltransferase (galU) from Escherichia coli O157:H7.